Consider the following 618-residue polypeptide: UvrABC system protein C (618 aa).

In terms of domain architecture, GIY-YIG spans D13–I92. In terms of domain architecture, UVR spans L204 to I239.

This sequence belongs to the UvrC family. As to quaternary structure, interacts with UvrB in an incision complex.

The protein resides in the cytoplasm. Its function is as follows. The UvrABC repair system catalyzes the recognition and processing of DNA lesions. UvrC both incises the 5' and 3' sides of the lesion. The N-terminal half is responsible for the 3' incision and the C-terminal half is responsible for the 5' incision. In Clostridium botulinum (strain 657 / Type Ba4), this protein is UvrABC system protein C.